Reading from the N-terminus, the 89-residue chain is Small ribosomal subunit protein uS19 (89 aa).

Belongs to the universal ribosomal protein uS19 family.

Functionally, protein S19 forms a complex with S13 that binds strongly to the 16S ribosomal RNA. This is Small ribosomal subunit protein uS19 from Brachyspira hyodysenteriae (strain ATCC 49526 / WA1).